The following is a 218-amino-acid chain: Esterase FPY3 (218 aa).

Active-site charge relay system residues include serine 95, aspartate 163, and histidine 190.

This sequence belongs to the LovG family.

Its pathway is secondary metabolite biosynthesis. Esterase; part of the gene cluster that mediates the biosynthesis of the gamma-pyrones fusapyrone (FPY) and deoxyfusapyrone (dFPY). FPY is an undecaketide and thus likely synthesized by the polyketide synthase FPY1 from acetyl-CoA functioning as starter unit and the addition of 10 malonyl-CoA extender units by successive Claisen-condensations. Next to this, FPY shares some rare features: C-glycosylated 4-deoxyglucose at C-3, a gem-dimethyl group at C-13, and an alpha-beta to beta-gamma double bond shift at C-20. During FPY biosynthesis mono-C-methyl groups are transferred to the tetra-, penta-, hexa- and heptaketide, while two C-methyl groups are transferred to the nonaketide, suggesting that the CMet domain is programmed to selectively catalyze two successive C-alpha-methylation reactions of the nonaketide, while other alpha-carbons are non- or mono-methylated only. While the origin of the 4'-deoxyglucose moiety remains opaque, its transfer to C-3 is most likely mediated by the C-glycosyltransferase FPY2. Next to this, the hydroxyl group present at C-33 and discriminating between FPY and dFPY, is likely to be installed by the cytochrome P450 monooxygenase FPY7. No putative function can be predicted for the remaining genes FPY3-FPY6. The sequence is that of Esterase FPY3 from Fusarium mangiferae (Mango malformation disease fungus).